The primary structure comprises 346 residues: N-acetyl-gamma-glutamyl-phosphate reductase (346 aa).

C149 is an active-site residue.

It belongs to the NAGSA dehydrogenase family. Type 1 subfamily.

The protein resides in the cytoplasm. The enzyme catalyses N-acetyl-L-glutamate 5-semialdehyde + phosphate + NADP(+) = N-acetyl-L-glutamyl 5-phosphate + NADPH + H(+). It participates in amino-acid biosynthesis; L-arginine biosynthesis; N(2)-acetyl-L-ornithine from L-glutamate: step 3/4. Its function is as follows. Catalyzes the NADPH-dependent reduction of N-acetyl-5-glutamyl phosphate to yield N-acetyl-L-glutamate 5-semialdehyde. This chain is N-acetyl-gamma-glutamyl-phosphate reductase, found in Geobacter metallireducens (strain ATCC 53774 / DSM 7210 / GS-15).